A 261-amino-acid chain; its full sequence is Indole-3-glycerol phosphate synthase (261 aa).

It belongs to the TrpC family.

It catalyses the reaction 1-(2-carboxyphenylamino)-1-deoxy-D-ribulose 5-phosphate + H(+) = (1S,2R)-1-C-(indol-3-yl)glycerol 3-phosphate + CO2 + H2O. The protein operates within amino-acid biosynthesis; L-tryptophan biosynthesis; L-tryptophan from chorismate: step 4/5. The sequence is that of Indole-3-glycerol phosphate synthase from Paraburkholderia phytofirmans (strain DSM 17436 / LMG 22146 / PsJN) (Burkholderia phytofirmans).